The chain runs to 100 residues: A-type ATP synthase subunit F (100 aa).

This sequence belongs to the V-ATPase F subunit family. As to quaternary structure, has multiple subunits with at least A(3), B(3), C, D, E, F, H, I and proteolipid K(x).

It is found in the cell membrane. In terms of biological role, component of the A-type ATP synthase that produces ATP from ADP in the presence of a proton gradient across the membrane. The protein is A-type ATP synthase subunit F of Methanospirillum hungatei JF-1 (strain ATCC 27890 / DSM 864 / NBRC 100397 / JF-1).